The sequence spans 521 residues: Bifunctional purine biosynthesis protein PurH (521 aa).

The region spanning 1–149 (MSDPVIKRAL…KNNESVTVVT (149 aa)) is the MGS-like domain.

It belongs to the PurH family.

The catalysed reaction is (6R)-10-formyltetrahydrofolate + 5-amino-1-(5-phospho-beta-D-ribosyl)imidazole-4-carboxamide = 5-formamido-1-(5-phospho-D-ribosyl)imidazole-4-carboxamide + (6S)-5,6,7,8-tetrahydrofolate. It carries out the reaction IMP + H2O = 5-formamido-1-(5-phospho-D-ribosyl)imidazole-4-carboxamide. The protein operates within purine metabolism; IMP biosynthesis via de novo pathway; 5-formamido-1-(5-phospho-D-ribosyl)imidazole-4-carboxamide from 5-amino-1-(5-phospho-D-ribosyl)imidazole-4-carboxamide (10-formyl THF route): step 1/1. It participates in purine metabolism; IMP biosynthesis via de novo pathway; IMP from 5-formamido-1-(5-phospho-D-ribosyl)imidazole-4-carboxamide: step 1/1. The chain is Bifunctional purine biosynthesis protein PurH from Chlorobium phaeobacteroides (strain DSM 266 / SMG 266 / 2430).